We begin with the raw amino-acid sequence, 122 residues long: Large ribosomal subunit protein bL12 (122 aa).

This sequence belongs to the bacterial ribosomal protein bL12 family. In terms of assembly, homodimer. Part of the ribosomal stalk of the 50S ribosomal subunit. Forms a multimeric L10(L12)X complex, where L10 forms an elongated spine to which 2 to 4 L12 dimers bind in a sequential fashion. Binds GTP-bound translation factors.

Functionally, forms part of the ribosomal stalk which helps the ribosome interact with GTP-bound translation factors. Is thus essential for accurate translation. The polypeptide is Large ribosomal subunit protein bL12 (Latilactobacillus sakei subsp. sakei (strain 23K) (Lactobacillus sakei subsp. sakei)).